Reading from the N-terminus, the 689-residue chain is Glycine--tRNA ligase beta subunit (689 aa).

This sequence belongs to the class-II aminoacyl-tRNA synthetase family. As to quaternary structure, tetramer of two alpha and two beta subunits.

The protein localises to the cytoplasm. The catalysed reaction is tRNA(Gly) + glycine + ATP = glycyl-tRNA(Gly) + AMP + diphosphate. This is Glycine--tRNA ligase beta subunit from Dichelobacter nodosus (strain VCS1703A).